The primary structure comprises 930 residues: Probable SapB synthase (930 aa).

The Protein kinase domain occupies 256–516 (YTVESALHFS…GSTRADETTR (261 aa)). ATP-binding positions include 262–270 (LHFSNGGGV) and lysine 285. Aspartate 395 functions as the Proton acceptor in the catalytic mechanism. Residues 447 to 467 (YALACLRIVLFLPLTSLLAVD) form a helical membrane-spanning segment. Basic and acidic residues predominate over residues 501–527 (GSTRVDGSTRADETTRADETTRLDVTT). 2 disordered regions span residues 501–558 (GSTR…RDSM) and 911–930 (PFLP…HQEP). Positions 532–546 (APDAARRPAGPVAPV) are enriched in low complexity. Positions 547-556 (RPDDWPRSRD) are enriched in basic and acidic residues.

It in the N-terminal section; belongs to the protein kinase superfamily.

It is found in the cell membrane. Required for aerial hyphae formation. Probably involved in processing the precursor of SapB to its mature form. This chain is Probable SapB synthase, found in Streptomyces coelicolor (strain ATCC BAA-471 / A3(2) / M145).